The sequence spans 417 residues: Phosphoglycerate kinase (417 aa).

Residues 24-26 (DLN), Arg44, 67-70 (HLGR), Arg126, and Arg170 contribute to the substrate site. ATP-binding positions include Lys220, Gly316, Glu347, and 373–376 (GGDS).

This sequence belongs to the phosphoglycerate kinase family. In terms of assembly, monomer.

Its subcellular location is the cytoplasm. The enzyme catalyses (2R)-3-phosphoglycerate + ATP = (2R)-3-phospho-glyceroyl phosphate + ADP. Its pathway is carbohydrate degradation; glycolysis; pyruvate from D-glyceraldehyde 3-phosphate: step 2/5. This chain is Phosphoglycerate kinase, found in Renibacterium salmoninarum (strain ATCC 33209 / DSM 20767 / JCM 11484 / NBRC 15589 / NCIMB 2235).